Here is a 486-residue protein sequence, read N- to C-terminus: Mitogen-activated protein kinase 17 (486 aa).

One can recognise a Protein kinase domain in the interval 16 to 307; the sequence is YQIQEVVGKG…AEEALADPYF (292 aa). Residues 22–30 and Lys-45 contribute to the ATP site; that span reads VGKGSYGVV. Residue Asp-142 is the Proton acceptor of the active site. Thr-178 carries the post-translational modification Phosphothreonine. A TXY motif is present at residues 178–180; the sequence is TDY. Tyr-180 is modified (phosphotyrosine). Thr-183 carries the post-translational modification Phosphothreonine. Residues 386–455 are disordered; that stretch reads EEHNDDEEEH…LSSQKASQVD (70 aa). A compositionally biased stretch (low complexity) spans 422–433; sequence SVHAQSSSASVV. A compositionally biased stretch (polar residues) spans 440-452; that stretch reads PNTATGLSSQKAS.

The protein belongs to the protein kinase superfamily. CMGC Ser/Thr protein kinase family. MAP kinase subfamily. Post-translationally, dually phosphorylated on Thr-178 and Tyr-180, which activates the enzyme.

It catalyses the reaction L-seryl-[protein] + ATP = O-phospho-L-seryl-[protein] + ADP + H(+). The catalysed reaction is L-threonyl-[protein] + ATP = O-phospho-L-threonyl-[protein] + ADP + H(+). With respect to regulation, activated by threonine and tyrosine phosphorylation. The chain is Mitogen-activated protein kinase 17 (MPK17) from Arabidopsis thaliana (Mouse-ear cress).